A 72-amino-acid chain; its full sequence is UPF0270 protein YheU (72 aa).

The protein belongs to the UPF0270 family.

This chain is UPF0270 protein YheU, found in Shigella flexneri serotype 5b (strain 8401).